The chain runs to 286 residues: Tyrosine recombinase XerA (286 aa).

Residues 5–82 (TLRSEVLEEF…ALKAYFKFEG (78 aa)) enclose the Core-binding (CB) domain. One can recognise a Tyr recombinase domain in the interval 98–274 (TLPKSLTEEE…TAKHLKEAVE (177 aa)). Active-site residues include R135, K160, H226, R229, and H252. Y261 (O-(3'-phospho-DNA)-tyrosine intermediate) is an active-site residue.

This sequence belongs to the 'phage' integrase family. XerA subfamily.

The protein resides in the cytoplasm. Site-specific tyrosine recombinase, which acts by catalyzing the cutting and rejoining of the recombining DNA molecules. This chain is Tyrosine recombinase XerA, found in Pyrococcus furiosus (strain ATCC 43587 / DSM 3638 / JCM 8422 / Vc1).